The sequence spans 1419 residues: DNA-directed RNA polymerase subunit beta' (1419 aa).

Zn(2+) contacts are provided by Cys-71, Cys-73, Cys-86, and Cys-89. Mg(2+) is bound by residues Asp-461, Asp-463, and Asp-465. Cys-815, Cys-889, Cys-896, and Cys-899 together coordinate Zn(2+).

It belongs to the RNA polymerase beta' chain family. In terms of assembly, the RNAP catalytic core consists of 2 alpha, 1 beta, 1 beta' and 1 omega subunit. When a sigma factor is associated with the core the holoenzyme is formed, which can initiate transcription. It depends on Mg(2+) as a cofactor. Zn(2+) serves as cofactor.

The catalysed reaction is RNA(n) + a ribonucleoside 5'-triphosphate = RNA(n+1) + diphosphate. In terms of biological role, DNA-dependent RNA polymerase catalyzes the transcription of DNA into RNA using the four ribonucleoside triphosphates as substrates. In Actinobacillus succinogenes (strain ATCC 55618 / DSM 22257 / CCUG 43843 / 130Z), this protein is DNA-directed RNA polymerase subunit beta'.